A 311-amino-acid chain; its full sequence is Methionyl-tRNA formyltransferase (311 aa).

Residue Ser109–Pro112 participates in (6S)-5,6,7,8-tetrahydrofolate binding.

This sequence belongs to the Fmt family.

It carries out the reaction L-methionyl-tRNA(fMet) + (6R)-10-formyltetrahydrofolate = N-formyl-L-methionyl-tRNA(fMet) + (6S)-5,6,7,8-tetrahydrofolate + H(+). Functionally, attaches a formyl group to the free amino group of methionyl-tRNA(fMet). The formyl group appears to play a dual role in the initiator identity of N-formylmethionyl-tRNA by promoting its recognition by IF2 and preventing the misappropriation of this tRNA by the elongation apparatus. The polypeptide is Methionyl-tRNA formyltransferase (Staphylococcus aureus (strain USA300)).